The primary structure comprises 291 residues: 4-hydroxy-tetrahydrodipicolinate synthase (291 aa).

Pyruvate is bound at residue T45. The active-site Proton donor/acceptor is Y133. The Schiff-base intermediate with substrate role is filled by K161. Residue I203 participates in pyruvate binding.

It belongs to the DapA family. As to quaternary structure, homotetramer; dimer of dimers.

The protein localises to the cytoplasm. The enzyme catalyses L-aspartate 4-semialdehyde + pyruvate = (2S,4S)-4-hydroxy-2,3,4,5-tetrahydrodipicolinate + H2O + H(+). It functions in the pathway amino-acid biosynthesis; L-lysine biosynthesis via DAP pathway; (S)-tetrahydrodipicolinate from L-aspartate: step 3/4. In terms of biological role, catalyzes the condensation of (S)-aspartate-beta-semialdehyde [(S)-ASA] and pyruvate to 4-hydroxy-tetrahydrodipicolinate (HTPA). In Neisseria meningitidis serogroup C / serotype 2a (strain ATCC 700532 / DSM 15464 / FAM18), this protein is 4-hydroxy-tetrahydrodipicolinate synthase.